The following is a 140-amino-acid chain: Nucleoside diphosphate kinase (140 aa).

Residues Lys-11, Phe-59, Arg-87, Thr-93, Arg-104, and Asn-114 each contribute to the ATP site. The active-site Pros-phosphohistidine intermediate is His-117.

This sequence belongs to the NDK family. Homotetramer. Requires Mg(2+) as cofactor.

Its subcellular location is the cytoplasm. The catalysed reaction is a 2'-deoxyribonucleoside 5'-diphosphate + ATP = a 2'-deoxyribonucleoside 5'-triphosphate + ADP. The enzyme catalyses a ribonucleoside 5'-diphosphate + ATP = a ribonucleoside 5'-triphosphate + ADP. Functionally, major role in the synthesis of nucleoside triphosphates other than ATP. The ATP gamma phosphate is transferred to the NDP beta phosphate via a ping-pong mechanism, using a phosphorylated active-site intermediate. This chain is Nucleoside diphosphate kinase, found in Francisella tularensis subsp. tularensis (strain SCHU S4 / Schu 4).